Here is a 30-residue protein sequence, read N- to C-terminus: U10-ctenitoxin-Co1b (30 aa).

2 disulfides stabilise this stretch: Cys-2-Cys-17 and Cys-9-Cys-22.

Expressed by the venom gland.

Its subcellular location is the secreted. In terms of biological role, antagonist of L-type calcium channels (Cav1/CACNA1). The sequence is that of U10-ctenitoxin-Co1b from Ctenus ornatus (Brazilian spider).